The following is a 423-amino-acid chain: G-protein coupled receptor 83 (423 aa).

A signal peptide spans 1–17; the sequence is MKVPPVLLLFLLSSVRA. Residues 18–71 lie on the Extracellular side of the membrane; it reads TEQPQVVTEHPSMEAALTGPNASSHFWANYTFSDWQNFVGRRRYGAESQNPTVK. Residues N38 and N46 are each glycosylated (N-linked (GlcNAc...) asparagine). A helical membrane pass occupies residues 72–92; sequence ALLIVAYSFTIVFSLFGNVLV. The Cytoplasmic portion of the chain corresponds to 93–107; it reads CHVIFKNQRMHSATS. Residues 108-129 form a helical membrane-spanning segment; that stretch reads LFIVNLAVADIMITLLNTPFTL. The Extracellular segment spans residues 130-145; it reads VRFVNSTWVFGKGMCH. N134 carries an N-linked (GlcNAc...) asparagine glycan. A disulfide bridge connects residues C144 and C224. The chain crosses the membrane as a helical span at residues 146-167; it reads VSRFAQYCSLHVSALTLTAIAV. The Cytoplasmic segment spans residues 168–186; that stretch reads DRHQVIMHPLKPRISITKG. Residues 187–208 traverse the membrane as a helical segment; it reads VIYIAVIWVMATFFSLPHAICQ. The Extracellular portion of the chain corresponds to 209–238; it reads KLFTFKYSEDIVRSLCLPDFPEPADLFWKY. Residues 239-260 form a helical membrane-spanning segment; that stretch reads LDLATFILLYLLPLFIISVAYA. The Cytoplasmic portion of the chain corresponds to 261–293; sequence RVAKKLWLCNTIGDVTTEQYLALRRKKKTTVKM. The helical transmembrane segment at 294-315 threads the bilayer; the sequence is LVLVVVLFALCWFPLNCYVLLL. Residues 316–327 are Extracellular-facing; the sequence is SSKAIHTNNALY. The chain crosses the membrane as a helical span at residues 328–348; it reads FAFHWFAMSSTCYNPFIYCWL. At 349–423 the chain is on the cytoplasmic side; sequence NENFRVELKA…SSVEPVVAMS (75 aa). The tract at residues 389 to 423 is disordered; the sequence is SHGRRAPLPNHHLPSSQIQSGKTDLSSVEPVVAMS. The span at 401–414 shows a compositional bias: polar residues; that stretch reads LPSSQIQSGKTDLS.

Belongs to the G-protein coupled receptor 1 family. In terms of tissue distribution, predominantly expressed in the brain, with moderate expression in the hypothalamus. Expressed in the thymus.

The protein resides in the cell membrane. Functionally, G-protein coupled receptor for PEN, a neuropeptide produced from the precursor protein, proSAAS (encoded by PCSK1N). Acts through a G(i)- and G(q)-alpha-alpha-mediated pathway in response to PEN. Plays a role in food intake and body weight regulation. May contribute to the regulation of anxiety-related behaviors. This Mus musculus (Mouse) protein is G-protein coupled receptor 83.